The following is a 573-amino-acid chain: 60 kDa heat shock protein, mitochondrial (573 aa).

Residues 1–26 constitute a mitochondrion transit peptide; the sequence is MLRLPAVLRQIRPVSRALAPHLTRAY. Residues lysine 75 and 111–115 contribute to the ATP site; that span reads DGTTT. Tyrosine 227 carries the post-translational modification Phosphotyrosine. Residues glycine 440 and aspartate 520 each coordinate ATP.

It is found in the mitochondrion matrix. The enzyme catalyses ATP + H2O + a folded polypeptide = ADP + phosphate + an unfolded polypeptide.. Its function is as follows. Chaperonin implicated in mitochondrial protein import and macromolecular assembly. Together with Hsp10, facilitates the correct folding of imported proteins. May also prevent misfolding and promote the refolding and proper assembly of unfolded polypeptides generated under stress conditions in the mitochondrial matrix. The functional units of these chaperonins consist of heptameric rings of the large subunit Hsp60, which function as a back-to-back double ring. In a cyclic reaction, Hsp60 ring complexes bind one unfolded substrate protein per ring, followed by the binding of ATP and association with 2 heptameric rings of the co-chaperonin Hsp10. This leads to sequestration of the substrate protein in the inner cavity of Hsp60 where, for a certain period of time, it can fold undisturbed by other cell components. Synchronous hydrolysis of ATP in all Hsp60 subunits results in the dissociation of the chaperonin rings and the release of ADP and the folded substrate protein. The chain is 60 kDa heat shock protein, mitochondrial from Gallus gallus (Chicken).